Reading from the N-terminus, the 555-residue chain is Formate--tetrahydrofolate ligase (555 aa).

Residue threonine 64–threonine 71 coordinates ATP.

It belongs to the formate--tetrahydrofolate ligase family.

The enzyme catalyses (6S)-5,6,7,8-tetrahydrofolate + formate + ATP = (6R)-10-formyltetrahydrofolate + ADP + phosphate. It participates in one-carbon metabolism; tetrahydrofolate interconversion. The chain is Formate--tetrahydrofolate ligase from Allorhizobium ampelinum (strain ATCC BAA-846 / DSM 112012 / S4) (Agrobacterium vitis (strain S4)).